Consider the following 405-residue polypeptide: Phosphopentomutase (405 aa).

Positions 10, 303, 308, 344, 345, and 356 each coordinate Mn(2+).

The protein belongs to the phosphopentomutase family. The cofactor is Mn(2+).

It is found in the cytoplasm. It catalyses the reaction 2-deoxy-alpha-D-ribose 1-phosphate = 2-deoxy-D-ribose 5-phosphate. It carries out the reaction alpha-D-ribose 1-phosphate = D-ribose 5-phosphate. The protein operates within carbohydrate degradation; 2-deoxy-D-ribose 1-phosphate degradation; D-glyceraldehyde 3-phosphate and acetaldehyde from 2-deoxy-alpha-D-ribose 1-phosphate: step 1/2. Its function is as follows. Isomerase that catalyzes the conversion of deoxy-ribose 1-phosphate (dRib-1-P) and ribose 1-phosphate (Rib-1-P) to deoxy-ribose 5-phosphate (dRib-5-P) and ribose 5-phosphate (Rib-5-P), respectively. This chain is Phosphopentomutase, found in Shewanella pealeana (strain ATCC 700345 / ANG-SQ1).